We begin with the raw amino-acid sequence, 306 residues long: Recombination-associated protein RdgC (306 aa).

The protein belongs to the RdgC family.

It localises to the cytoplasm. The protein resides in the nucleoid. In terms of biological role, may be involved in recombination. The sequence is that of Recombination-associated protein RdgC from Pseudomonas aeruginosa (strain ATCC 15692 / DSM 22644 / CIP 104116 / JCM 14847 / LMG 12228 / 1C / PRS 101 / PAO1).